Consider the following 342-residue polypeptide: Isopentenyl-diphosphate delta-isomerase (342 aa).

11 to 12 (RK) contacts substrate. Residues Ser68, 69 to 71 (SMT), Ser99, and Asn128 contribute to the FMN site. Position 99–101 (99–101 (SQR)) interacts with substrate. Position 162 (Gln162) interacts with substrate. Glu163 contacts Mg(2+). FMN is bound by residues Lys194, Ser219, Thr224, 275–277 (GVR), and 296–297 (AK).

It belongs to the IPP isomerase type 2 family. Homooctamer. Dimer of tetramers. The cofactor is FMN. NADPH serves as cofactor. Mg(2+) is required as a cofactor.

It localises to the cytoplasm. The catalysed reaction is isopentenyl diphosphate = dimethylallyl diphosphate. Its function is as follows. Involved in the biosynthesis of isoprenoids. Catalyzes the 1,3-allylic rearrangement of the homoallylic substrate isopentenyl (IPP) to its allylic isomer, dimethylallyl diphosphate (DMAPP). This chain is Isopentenyl-diphosphate delta-isomerase, found in Legionella pneumophila (strain Lens).